Consider the following 874-residue polypeptide: Protein Son (874 aa).

3 disordered regions span residues 1–45, 68–98, and 120–368; these read MTEN…ERPD, RRSN…NIKP, and ELLD…SRDL. Over residues 12-24 the composition is skewed to polar residues; the sequence is ETPQVAGSQTNPP. Over residues 70–89 the composition is skewed to low complexity; it reads SNSNELGNNDESGESESSAS. Basic residues-rich tracts occupy residues 128–147 and 162–175; these read KKKK…KKKT and KHKH…HKDI. Composition is skewed to basic and acidic residues over residues 176–219 and 226–277; these read RVKD…KDKF and SEKE…ERVR. A G-patch domain is found at 705-751; it reads TGGMGMALLQKMGWKPGEGLGRCKTGSLQPLLLDVKLDKRGLVSRDD. Residues 800–870 form the DRBM domain; the sequence is HPVCVLNELT…AALCLRSLGI (71 aa).

In terms of tissue distribution, expressed in ovarian nurse cells (at protein level).

The protein resides in the nucleus. RNA-binding protein that protects nascent transcripts containing intronic transposable sequences, known as INE-1, from being degraded by DIP1. Modulates DIP1 activity by repressing its sumoylation levels. This ensures that intronic sequences will be degradated only after splicing. In the ovaries, regulates germline stem cells (GSCs) self-renewal by repressing the expression of the GSC differentiation-promoting factor Rga. This is Protein Son from Drosophila melanogaster (Fruit fly).